The primary structure comprises 647 residues: MGQTKSKIKSKYASYLSFIKILLKRGGVKVSTKNLIKLFQIIEQFCPWFPEQGTLDLKDWKRIGKELKQAGRKGNIIPLTVWNDWAIIKAALEPFQTEEDSISVSDAPGSCLIDCNENTRKKSQKETESLHCEYVAEPVMAQSTQNVDYNQLQEVIYPETLKLEGKGPELVGPSESKPRGTSPLPAGQVPVTLQPQKQVKENKTQPPVAYQYWPPAELQYRPPPESQYGYPGMPPAPQGREPYPQPPTRRLNPTAPPSRQGSELHEIIDKSRKEGDTEAWQFPVTLEPMPPGEGAQEGEPPTVEARYKSFSIKMLKDMKEGVKQYGPNSPYMRTLLDSIAHGHRLIPYDWEILAKSSLSPSQFLQFKTWWIDGVQEQVRRNRAANPPVNIDADQLLGIGQNWSTISQQALMQNEAIEQVRAICLRAWEKIQDPGSTCPSFNTVRQGSKEPYPDFVARLQDVAQKSIADEKARKVIVELMAYENANPECQSAIKPLKGKVPAGSDVISEYVKACDGIGGAMHKAMLMAQAITGVVLGGQVRTFGGKCYNCGQIGHLKKNCPVLNKQNITIQATTTGREPPDLCPRCKKGKHWASQCRSKFDKNGQPLSGNEQRGQPQAPQQTGAFPIQPFVPQGFQDNNPHCPKCFRE.

A lipid anchor (N-myristoyl glycine) is attached at glycine 2. The disordered stretch occupies residues 165-264 (GKGPELVGPS…APPSRQGSEL (100 aa)). Residues 232-247 (GMPPAPQGREPYPQPP) show a composition bias toward pro residues. 2 consecutive CCHC-type zinc fingers follow at residues 544–561 (GKCYNCGQIGHLKKNCPV) and 580–597 (DLCPRCKKGKHWASQCRS). A disordered region spans residues 598–641 (KFDKNGQPLSGNEQRGQPQAPQQTGAFPIQPFVPQGFQDNNPHC). Polar residues predominate over residues 604-622 (QPLSGNEQRGQPQAPQQTG).

It belongs to the beta type-B retroviral Gag protein family. HERV class-II K(HML-2) gag subfamily. Myristoylation is essential for retroviral assembly. Alteration of the glycine residue leads to a block in the budding of particles and an accumulation of Gag inside the cell. Post-translationally, specific enzymatic cleavages may yield mature proteins.

It is found in the cell membrane. Functionally, the products of the Gag polyproteins of infectious retroviruses perform highly complex orchestrated tasks during the assembly, budding, maturation, and infection stages of the viral replication cycle. During viral assembly, the proteins form membrane associations and self-associations that ultimately result in budding of an immature virion from the infected cell. Gag precursors also function during viral assembly to selectively bind and package two plus strands of genomic RNA. Endogenous Gag proteins may have kept, lost or modified their original function during evolution. This is Endogenous retrovirus group K member 8 Gag polyprotein (ERVK-8) from Homo sapiens (Human).